A 316-amino-acid polypeptide reads, in one-letter code: Biotin synthase (316 aa).

Residues 36 to 260 (NKIQISMLLN…LMPKSYIRLA (225 aa)) form the Radical SAM core domain. Residues Cys51, Cys55, and Cys58 each coordinate [4Fe-4S] cluster. Residues Cys95, Cys126, Cys186, and Arg258 each coordinate [2Fe-2S] cluster.

It belongs to the radical SAM superfamily. Biotin synthase family. As to quaternary structure, homodimer. It depends on [4Fe-4S] cluster as a cofactor. The cofactor is [2Fe-2S] cluster.

It catalyses the reaction (4R,5S)-dethiobiotin + (sulfur carrier)-SH + 2 reduced [2Fe-2S]-[ferredoxin] + 2 S-adenosyl-L-methionine = (sulfur carrier)-H + biotin + 2 5'-deoxyadenosine + 2 L-methionine + 2 oxidized [2Fe-2S]-[ferredoxin]. Its pathway is cofactor biosynthesis; biotin biosynthesis; biotin from 7,8-diaminononanoate: step 2/2. Functionally, catalyzes the conversion of dethiobiotin (DTB) to biotin by the insertion of a sulfur atom into dethiobiotin via a radical-based mechanism. In Lawsonia intracellularis (strain PHE/MN1-00), this protein is Biotin synthase.